The following is a 537-amino-acid chain: Putative cysteine ligase BshC (537 aa).

Belongs to the BshC family.

Involved in bacillithiol (BSH) biosynthesis. May catalyze the last step of the pathway, the addition of cysteine to glucosamine malate (GlcN-Mal) to generate BSH. The polypeptide is Putative cysteine ligase BshC (Staphylococcus saprophyticus subsp. saprophyticus (strain ATCC 15305 / DSM 20229 / NCIMB 8711 / NCTC 7292 / S-41)).